A 149-amino-acid polypeptide reads, in one-letter code: Transcriptional repressor NrdR (149 aa).

Residues 3–34 fold into a zinc finger; that stretch reads CPFCSENDTKVIDSRLVADGHQVRRRRQCLAC. The 91-residue stretch at 49 to 139 folds into the ATP-cone domain; the sequence is PKVIKSNGNR…VYRSFEDIRE (91 aa).

It belongs to the NrdR family. The cofactor is Zn(2+).

Functionally, negatively regulates transcription of bacterial ribonucleotide reductase nrd genes and operons by binding to NrdR-boxes. This chain is Transcriptional repressor NrdR, found in Vibrio vulnificus (strain YJ016).